A 201-amino-acid chain; its full sequence is Small ribosomal subunit protein uS4 (201 aa).

Residues 20-46 are disordered; it reads SGTGKELSRRPYAPGQHGQDRRGSLSE. Positions 93–156 constitute an S4 RNA-binding domain; it reads RRLDNVVYRL…KDLQIVKEAL (64 aa).

Belongs to the universal ribosomal protein uS4 family. As to quaternary structure, part of the 30S ribosomal subunit. Contacts protein S5. The interaction surface between S4 and S5 is involved in control of translational fidelity.

In terms of biological role, one of the primary rRNA binding proteins, it binds directly to 16S rRNA where it nucleates assembly of the body of the 30S subunit. Its function is as follows. With S5 and S12 plays an important role in translational accuracy. This chain is Small ribosomal subunit protein uS4, found in Ligilactobacillus salivarius (strain UCC118) (Lactobacillus salivarius).